The chain runs to 541 residues: Apolipoprotein N-acyltransferase (541 aa).

6 helical membrane-spanning segments follow: residues Leu-21–Leu-41, Leu-54–Leu-74, Leu-82–Ser-102, Phe-116–Phe-136, Phe-157–Phe-177, and Met-189–Leu-209. The region spanning Leu-220–Leu-499 is the CN hydrolase domain. The active-site Proton acceptor is Glu-264. The active site involves Lys-349. The active-site Nucleophile is the Cys-404. Residues Tyr-512–Tyr-532 traverse the membrane as a helical segment.

This sequence belongs to the CN hydrolase family. Apolipoprotein N-acyltransferase subfamily.

The protein resides in the cell inner membrane. It carries out the reaction N-terminal S-1,2-diacyl-sn-glyceryl-L-cysteinyl-[lipoprotein] + a glycerophospholipid = N-acyl-S-1,2-diacyl-sn-glyceryl-L-cysteinyl-[lipoprotein] + a 2-acyl-sn-glycero-3-phospholipid + H(+). The protein operates within protein modification; lipoprotein biosynthesis (N-acyl transfer). Its function is as follows. Catalyzes the phospholipid dependent N-acylation of the N-terminal cysteine of apolipoprotein, the last step in lipoprotein maturation. The sequence is that of Apolipoprotein N-acyltransferase from Chlamydia pneumoniae (Chlamydophila pneumoniae).